Here is a 337-residue protein sequence, read N- to C-terminus: Probable tyrosine--tRNA ligase, cytoplasmic (337 aa).

Tyrosine 35 is a binding site for L-tyrosine. Residues 40 to 48 (ITGKPHIAY) carry the 'HIGH' region motif. L-tyrosine is bound by residues tyrosine 162, glutamine 166, aspartate 169, and glutamine 184. The 'KMSKS' region signature appears at 218-222 (KMSSS).

The protein belongs to the class-I aminoacyl-tRNA synthetase family. Homodimer.

It localises to the cytoplasm. The enzyme catalyses tRNA(Tyr) + L-tyrosine + ATP = L-tyrosyl-tRNA(Tyr) + AMP + diphosphate + H(+). In Encephalitozoon cuniculi (strain GB-M1) (Microsporidian parasite), this protein is Probable tyrosine--tRNA ligase, cytoplasmic.